A 311-amino-acid polypeptide reads, in one-letter code: 4-hydroxy-tetrahydrodipicolinate synthase (311 aa).

Position 51 (T51) interacts with pyruvate. The active-site Proton donor/acceptor is Y140. K168 functions as the Schiff-base intermediate with substrate in the catalytic mechanism. Pyruvate is bound at residue I209.

It belongs to the DapA family. As to quaternary structure, homotetramer; dimer of dimers.

Its subcellular location is the cytoplasm. The enzyme catalyses L-aspartate 4-semialdehyde + pyruvate = (2S,4S)-4-hydroxy-2,3,4,5-tetrahydrodipicolinate + H2O + H(+). It participates in amino-acid biosynthesis; L-lysine biosynthesis via DAP pathway; (S)-tetrahydrodipicolinate from L-aspartate: step 3/4. Catalyzes the condensation of (S)-aspartate-beta-semialdehyde [(S)-ASA] and pyruvate to 4-hydroxy-tetrahydrodipicolinate (HTPA). This chain is 4-hydroxy-tetrahydrodipicolinate synthase, found in Streptococcus pneumoniae (strain Hungary19A-6).